The following is a 597-amino-acid chain: NADPH-dependent diflavin oxidoreductase 1 (597 aa).

Residues 6–150 (LLVLFGSQTG…AIDPWLQDLW (145 aa)) enclose the Flavodoxin-like domain. FMN-binding positions include 12–17 (SQTGTA), 59–62 (ATTG), 97–106 (LGDSSYAKFN), and Asp132. Residues 206 to 446 (LQPFLAPMVS…WVRSGGLTFP (241 aa)) enclose the FAD-binding FR-type domain. Residues Arg350, 382–385 (RAFS), and 416–419 (GLCS) contribute to the FAD site. Residues Thr460, 515–516 (SR), 521–525 (KVYVQ), and Asp558 contribute to the NADP(+) site. Residue Trp596 coordinates FAD.

The protein belongs to the NADPH-dependent diflavin oxidoreductase NDOR1 family. In the N-terminal section; belongs to the flavodoxin family. This sequence in the C-terminal section; belongs to the flavoprotein pyridine nucleotide cytochrome reductase family. In terms of assembly, interacts with CIAPIN1; as part of the cytosolic iron-sulfur (Fe-S) protein assembly (CIA) machinery. Interacts with DCPS. FAD is required as a cofactor. It depends on FMN as a cofactor.

The protein resides in the cytoplasm. It is found in the perinuclear region. It catalyses the reaction 2 oxidized [2Fe-2S]-[protein] + NADPH = 2 reduced [2Fe-2S]-[protein] + NADP(+) + H(+). Its function is as follows. NADPH-dependent reductase which is a central component of the cytosolic iron-sulfur (Fe-S) protein assembly (CIA) machinery. Transfers electrons from NADPH via its FAD and FMN prosthetic groups to the [2Fe-2S] cluster of CIAPIN1, another key component of the CIA machinery. In turn, this reduced cluster provides electrons for assembly of cytosolic iron-sulfur cluster proteins. It can also reduce the [2Fe-2S] cluster of CISD1 and activate this protein implicated in Fe/S cluster repair. In vitro can fully activate methionine synthase/MTR in the presence of soluble cytochrome b5/CYB5A. This is NADPH-dependent diflavin oxidoreductase 1 from Bos taurus (Bovine).